We begin with the raw amino-acid sequence, 624 residues long: uncharacterized protein (624 aa).

The first 29 residues, 1-29 (MRFHRQGTAATVGVLLIVLLGFCWKLSES), serve as a signal peptide directing secretion. Asn68, Asn150, Asn219, Asn366, Asn441, Asn447, Asn464, and Asn528 each carry an N-linked (GlcNAc...) asparagine glycan. The disordered stretch occupies residues 141 to 174 (LERRHGRFGNGTHGDHPKGPPPPPPPDEKDRGSQ).

Its subcellular location is the secreted. This is an uncharacterized protein from Saccharomyces cerevisiae (strain ATCC 204508 / S288c) (Baker's yeast).